The following is a 239-amino-acid chain: Phosphoribosylaminoimidazole-succinocarboxamide synthase (239 aa).

Belongs to the SAICAR synthetase family.

It catalyses the reaction 5-amino-1-(5-phospho-D-ribosyl)imidazole-4-carboxylate + L-aspartate + ATP = (2S)-2-[5-amino-1-(5-phospho-beta-D-ribosyl)imidazole-4-carboxamido]succinate + ADP + phosphate + 2 H(+). The protein operates within purine metabolism; IMP biosynthesis via de novo pathway; 5-amino-1-(5-phospho-D-ribosyl)imidazole-4-carboxamide from 5-amino-1-(5-phospho-D-ribosyl)imidazole-4-carboxylate: step 1/2. The chain is Phosphoribosylaminoimidazole-succinocarboxamide synthase from Acinetobacter baumannii (strain AB307-0294).